The following is a 559-amino-acid chain: Putative ankyrin repeat protein RBE_0902 (559 aa).

ANK repeat units follow at residues 11 to 40 (DGWT…EQAI), 46 to 75 (DGNT…DQAI), 81 to 110 (DGNT…TKQN), 158 to 189 (DDWT…VINH), 228 to 257 (NNDT…DQAI), 263 to 292 (DGNT…DQAI), 298 to 327 (YGNT…EQAI), 333 to 364 (QCDT…AINC), 372 to 402 (FGFT…EVII), and 524 to 554 (IDNN…WGLE).

The protein is Putative ankyrin repeat protein RBE_0902 of Rickettsia bellii (strain RML369-C).